The following is a 240-amino-acid chain: Zein-alpha A20 (240 aa).

The first 21 residues, 1 to 21 (MATKIFSLLMLLALSACVANA), serve as a signal peptide directing secretion.

It belongs to the zein family.

Zeins are major seed storage proteins. This chain is Zein-alpha A20, found in Zea mays (Maize).